Reading from the N-terminus, the 129-residue chain is Ribosome-binding factor A (129 aa).

It belongs to the RbfA family. Monomer. Binds 30S ribosomal subunits, but not 50S ribosomal subunits or 70S ribosomes.

It localises to the cytoplasm. One of several proteins that assist in the late maturation steps of the functional core of the 30S ribosomal subunit. Associates with free 30S ribosomal subunits (but not with 30S subunits that are part of 70S ribosomes or polysomes). Required for efficient processing of 16S rRNA. May interact with the 5'-terminal helix region of 16S rRNA. This chain is Ribosome-binding factor A, found in Desulfosudis oleivorans (strain DSM 6200 / JCM 39069 / Hxd3) (Desulfococcus oleovorans).